A 498-amino-acid chain; its full sequence is MASQGTKRSYEQMETDGERQNATEIRASVGRMIGGIGRFYIQMCTELKLNDYEGRLIQNSLTIERMVLSAFDERRNKYLEEHPSAGKDPKKTGGPIYKRVDGKWVRELVLYDKEEIRRIWRQANNGDDATAGLTHIMIWHSNLNDTTYQRTRALVRTGMDPRMCSLMQGSTLPRRSGAAGAAVKGVGTMVLELIRMIKRGINDRNFWRGENGRKTRIAYERMCNILKGKFQTAAQRAMMDQVRESRNPGNAEIEDLTFLARSALILRGSVAHKSCLPACVYGPAVASGYDFEKEGYSLVGVDPFKLLQTSQVYSLIRPNENPAHKSQLVWMACNSAAFEDLRVSSFIRGTRVLPRGKLSTRGVQIASNENMDAIVSSTLELRSRYWAIRTRSGGNTNQQRASAGQISTQPTFSVQRNLPFDKTTIMAAFTGNAEGRTSDMRAEIIKMMESARPEEVSFQGRGVFELSDERATNPIVPSFDMSNEGSYFFGDNAEEYDN.

The Unconventional nuclear localization signal signature appears at 1-18 (MASQGTKRSYEQMETDGE). Positions 1–21 (MASQGTKRSYEQMETDGERQN) are disordered. Residues 8-21 (RSYEQMETDGERQN) are compositionally biased toward basic and acidic residues. The Bipartite nuclear localization signal signature appears at 198 to 216 (KRGINDRNFWRGENGRKTR).

The protein belongs to the influenza viruses nucleoprotein family. As to quaternary structure, homomultimerizes to form the nucleocapsid. May bind host exportin-1/XPO1. Binds to viral genomic RNA. Protein-RNA contacts are mediated by a combination of electrostatic interactions between positively charged residues and the phosphate backbone and planar interactions between aromatic side chains and bases. Late in virus-infected cells, may be cleaved from a 56-kDa protein to a 53-kDa protein by a cellular caspase. This cleavage might be a marker for the onset of apoptosis in infected cells or have a specific function in virus host interaction.

It localises to the virion. The protein localises to the host nucleus. Its function is as follows. Encapsidates the negative strand viral RNA, protecting it from nucleases. The encapsidated genomic RNA is termed the ribonucleoprotein (RNP) and serves as template for transcription and replication. The RNP needs to be localized in the host nucleus to start an infectious cycle, but is too large to diffuse through the nuclear pore complex. NP comprises at least 2 nuclear localization signals that are responsible for the active RNP import into the nucleus through cellular importin alpha/beta pathway. Later in the infection, nclear export of RNPs are mediated through viral proteins NEP interacting with M1 which binds nucleoproteins. It is possible that nucleoprotein binds directly host exportin-1/XPO1 and plays an active role in RNPs nuclear export. M1 interaction with RNP seems to hide nucleoprotein's nuclear localization signals. Soon after a virion infects a new cell, M1 dissociates from the RNP under acidification of the virion driven by M2 protein. Dissociation of M1 from RNP unmasks nucleoprotein's nuclear localization signals, targeting the RNP to the nucleus. This Influenza A virus (strain A/China:Nanchang/11/1996 H1N1) protein is Nucleoprotein.